Reading from the N-terminus, the 408-residue chain is Snake venom metalloproteinase BaP1 (408 aa).

The first 20 residues, 1–20 (MIEVLLVTICLAVFPYQGSS), serve as a signal peptide directing secretion. A propeptide spanning residues 21-191 (IILESGNVND…KASQSNLTPE (171 aa)) is cleaved from the precursor. A Pyrrolidone carboxylic acid modification is found at Gln192. The 197-residue stretch at 198–394 (RYIELAVVAD…HNPQCILNKP (197 aa)) folds into the Peptidase M12B domain. 3 cysteine pairs are disulfide-bonded: Cys309–Cys389, Cys349–Cys373, and Cys351–Cys356. Position 334 (His334) interacts with Zn(2+). Glu335 is a catalytic residue. 2 residues coordinate Zn(2+): His338 and His344. Positions 395–408 (LLTVSGNELLEAGE) are excised as a propeptide.

The protein belongs to the venom metalloproteinase (M12B) family. P-I subfamily. In terms of assembly, monomer. It depends on Zn(2+) as a cofactor. Expressed by the venom gland.

The protein localises to the secreted. Its activity is regulated as follows. Inhibited by EDTA, partially inhibited by o-phenantropine, and not inhibited by PMSF, pepstatin A, and aprotinin. In terms of biological role, zinc metalloprotease that exhibits a weak hemorrhagic activity (with a minimum hemorrhagic dose of 20 ug by intradermal and intramuscular injection into mice). The basal membrane components collagen (all chains of type IV) (COL4A4), laminin and nidogen are all degraded by this toxin. Rapidly degrades the Aalpha-chain (FGA) of fibrinogen, and later on, degrades the Bbeta-chain (FGB) of fibrinogen. Also activates the complement system, and induces rat neutrophil chemotaxis. Induces edema in mouse food pad and shows a mild myotoxicity. The protein is Snake venom metalloproteinase BaP1 of Bothrops asper (Terciopelo).